Here is a 122-residue protein sequence, read N- to C-terminus: Small ribosomal subunit protein uS13 (122 aa).

The disordered stretch occupies residues 99–122 (RGQRTHTNARTRKGPAKAIAGKKK).

This sequence belongs to the universal ribosomal protein uS13 family. In terms of assembly, part of the 30S ribosomal subunit. Forms a loose heterodimer with protein S19. Forms two bridges to the 50S subunit in the 70S ribosome.

Functionally, located at the top of the head of the 30S subunit, it contacts several helices of the 16S rRNA. In the 70S ribosome it contacts the 23S rRNA (bridge B1a) and protein L5 of the 50S subunit (bridge B1b), connecting the 2 subunits; these bridges are implicated in subunit movement. Contacts the tRNAs in the A and P-sites. The polypeptide is Small ribosomal subunit protein uS13 (Agrobacterium fabrum (strain C58 / ATCC 33970) (Agrobacterium tumefaciens (strain C58))).